Reading from the N-terminus, the 379-residue chain is Succinyl-diaminopimelate desuccinylase (379 aa).

A Zn(2+)-binding site is contributed by His68. Residue Asp70 is part of the active site. Asp101 is a binding site for Zn(2+). Glu134 functions as the Proton acceptor in the catalytic mechanism. 3 residues coordinate Zn(2+): Glu135, Glu163, and His352.

The protein belongs to the peptidase M20A family. DapE subfamily. As to quaternary structure, homodimer. Zn(2+) is required as a cofactor. It depends on Co(2+) as a cofactor.

It catalyses the reaction N-succinyl-(2S,6S)-2,6-diaminopimelate + H2O = (2S,6S)-2,6-diaminopimelate + succinate. It participates in amino-acid biosynthesis; L-lysine biosynthesis via DAP pathway; LL-2,6-diaminopimelate from (S)-tetrahydrodipicolinate (succinylase route): step 3/3. Catalyzes the hydrolysis of N-succinyl-L,L-diaminopimelic acid (SDAP), forming succinate and LL-2,6-diaminopimelate (DAP), an intermediate involved in the bacterial biosynthesis of lysine and meso-diaminopimelic acid, an essential component of bacterial cell walls. This chain is Succinyl-diaminopimelate desuccinylase, found in Dinoroseobacter shibae (strain DSM 16493 / NCIMB 14021 / DFL 12).